The primary structure comprises 537 residues: Aminopeptidase Y (537 aa).

An N-terminal signal peptide occupies residues 1-21 (MHFSLKQLAVAAFYATNLGSA). A propeptide spanning residues 22–56 (YVIPQFFQEAFQQEEPIENYLPQLNDDDSSAVAAN) is cleaved from the precursor. N-linked (GlcNAc...) asparagine glycosylation is found at asparagine 85, asparagine 96, asparagine 115, asparagine 150, and asparagine 162. Histidine 314 and aspartate 326 together coordinate Zn(2+). Glutamate 358 serves as the catalytic Proton acceptor. Glutamate 359 is a Zn(2+) binding site. An N-linked (GlcNAc...) asparagine glycan is attached at asparagine 371. Aspartate 387 contacts Zn(2+). Asparagine 427 carries an N-linked (GlcNAc...) asparagine glycan. Histidine 472 contacts Zn(2+). Residue asparagine 480 is glycosylated (N-linked (GlcNAc...) asparagine).

Belongs to the peptidase M28 family. M28A subfamily. As to quaternary structure, monomer. It depends on Zn(2+) as a cofactor.

Its subcellular location is the vacuole. It catalyses the reaction Preferentially, release of N-terminal lysine.. In Saccharomyces cerevisiae (strain ATCC 204508 / S288c) (Baker's yeast), this protein is Aminopeptidase Y (APE3).